The sequence spans 755 residues: PWWP domain-containing protein 2A (755 aa).

Residues 1–15 are compositionally biased toward low complexity; the sequence is MAAVAAEAAATAASP. Residues 1–153 form a disordered region; sequence MAAVAAEAAA…VPPAGGDSTV (153 aa). A compositionally biased stretch (pro residues) spans 64–76; sequence DEPPLPPPPPPPG. Phosphoserine occurs at positions 81, 102, 116, and 119. The segment covering 112 to 126 has biased composition (pro residues); that stretch reads ELPPSPASPPEQPPA. Residues 148 to 373 are interaction with HDAC1 and MTA1; that stretch reads GGDSTVSQLI…KLKTDHKVDG (226 aa). Lys-208 is covalently cross-linked (Glycyl lysine isopeptide (Lys-Gly) (interchain with G-Cter in SUMO2)). 4 disordered regions span residues 282–301, 334–384, 400–562, and 578–626; these read YNQSIPQPPPRKIKRPKRKM, KEIR…KRNA, KVSA…GSKN, and SSAS…SKEE. Residues 292–301 show a composition bias toward basic residues; sequence RKIKRPKRKM. Basic and acidic residues-rich tracts occupy residues 346–356 and 368–381; these read SKYEDKKRRNE and DHKVDGKNQNESQK. Residues 403 to 421 show a composition bias toward polar residues; that stretch reads AQANTSKAQLSTKKVLQSK. Residues 422–444 show a composition bias toward basic and acidic residues; sequence NMDHAKAREVLKIAKEKAQKKQN. Residues 423 to 574 form an interaction with the H2A.Z/H2AZ1 region; sequence MDHAKAREVL…SVYMTLNQKK (152 aa). Over residues 508-527 the composition is skewed to polar residues; sequence SRCTSTRSAGEAPSENQSPS. The segment covering 593–603 has biased composition (low complexity); the sequence is SSNSECSSSES. Residues 655–715 enclose the PWWP domain; that stretch reads VGDIVWAKIY…LSQLSPFLEN (61 aa).

As to quaternary structure, component of a MTA1-specific subcomplex of the NuRD complex (M1HR), composed of PWWP2A, MTA1/2, HDAC1/2, and RBBP4/7 but does not contain CHD4 and MBD3. Interacts with MTA1; the interaction mediates the association of PWWP2A with the M1HR complex. Interacts with H2A.Z/H2AZ1. Interacts (via PWWP domain) with histone H3 trimethylated at 'Lys-36' (H3K36me3). Does not interact with CHD4 and MBD3. In terms of assembly, interacts with MTA1 and with HDAC1 in a MTA1-dependent manner. Does not interact with CHD4 and MBD3.

It is found in the nucleus. Functionally, chromatin-binding protein that acts as an adapter between distinct nucleosome components (H3K36me3 or H2A.Z) and chromatin-modifying complexes, contributing to the regulation of the levels of histone acetylation at actively transcribed genes. Competes with CHD4 and MBD3 for interaction with MTA1 to form a NuRD subcomplex, preventing the formation of full NuRD complex (containing CHD4 and MBD3), leading to recruitment of HDACs to gene promoters resulting in turn in the deacetylation of nearby H3K27 and H2A.Z. Plays a role in facilitating transcriptional elongation and repression of spurious transcription initiation through regulation of histone acetylation. Essential for proper mitosis progression. The protein is PWWP domain-containing protein 2A (PWWP2A) of Homo sapiens (Human).